We begin with the raw amino-acid sequence, 533 residues long: MKMRRYKLFLMFCMAGLCLISFLHFFKTLSYVTFPRELASLSPNLVSSFFWNNAPVTPQASPEPGGPDLLRTPLYSHSPLLQPLPPSKAAEELHRVDLVLPEDTTEYFVRTKAGGVCFKPGTKMLERPPPGRPEEKPEGANGSSARRPPRYLLSARERTGGRGARRKWVECVCLPGWHGPSCGVPTVVQYSNLPTKERLVPREVPRRVINAINVNHEFDLLDVRFHELGDVVDAFVVCESNFTAYGEPRPLKFREMLTNGTFEYIRHKVLYVFLDHFPPGGRQDGWIADDYLRTFLTQDGVSRLRNLRPDDVFIIDDADEIPARDGVLFLKLYDGWTEPFAFHMRKSLYGFFWKQPGTLEVVSGCTVDMLQAVYGLDGIRLRRRQYYTMPNFRQYENRTGHILVQWSLGSPLHFAGWHCSWCFTPEGIYFKLVSAQNGDFPRWGDYEDKRDLNYIRGLIRTGGWFDGTQQEYPPADPSEHMYAPKYLLKNYDRFHYLLDNPYQEPRSTAAGGWRHRGPEGRPPARGKLDEAEV.

Residues 1-7 (MKMRRYK) lie on the Cytoplasmic side of the membrane. The helical; Signal-anchor for type II membrane protein transmembrane segment at 8–23 (LFLMFCMAGLCLISFL) threads the bilayer. At 24–533 (HFFKTLSYVT…ARGKLDEAEV (510 aa)) the chain is on the lumenal side. The interval 119–158 (KPGTKMLERPPPGRPEEKPEGANGSSARRPPRYLLSARER) is disordered. 4 N-linked (GlcNAc...) asparagine glycosylation sites follow: asparagine 141, asparagine 241, asparagine 259, and asparagine 397. The tract at residues 507–533 (STAAGGWRHRGPEGRPPARGKLDEAEV) is disordered.

This sequence belongs to the glycosyltransferase 17 family. Interacts with MGAT4D.

The protein localises to the golgi apparatus membrane. The enzyme catalyses N(4)-{beta-D-GlcNAc-(1-&gt;2)-alpha-D-Man-(1-&gt;3)-[beta-D-GlcNAc-(1-&gt;2)-alpha-D-Man-(1-&gt;6)]-beta-D-Man-(1-&gt;4)-beta-D-GlcNAc-(1-&gt;4)-beta-D-GlcNAc}-L-asparaginyl-[protein] + UDP-N-acetyl-alpha-D-glucosamine = N(4)-{beta-D-GlcNAc-(1-&gt;2)-alpha-D-Man-(1-&gt;3)-[beta-D-GlcNAc-(1-&gt;4)]-[beta-D-GlcNAc-(1-&gt;2)-alpha-D-Man-(1-&gt;6)]-beta-D-Man-(1-&gt;4)-beta-D-GlcNAc-(1-&gt;4)-beta-D-GlcNAc}-L-asparaginyl-[protein] + UDP + H(+). The protein operates within protein modification; protein glycosylation. Functionally, it is involved in the regulation of the biosynthesis and biological function of glycoprotein oligosaccharides. Catalyzes the addition of N-acetylglucosamine in beta 1-4 linkage to the beta-linked mannose of the trimannosyl core of N-linked sugar chains, called bisecting N-acetylglucosamine (GlcNAc). It is one of the most important enzymes involved in the regulation of the biosynthesis of glycoprotein oligosaccharides. The addition of this bisecting GlcNAc residue alters not only the composition, but also the conformation of the N-glycan. The introduction of the bisecting GlcNAc residue results in the suppression of further processing and elongation of N-glycans, precluding the formation of beta-1,6 GlcNAc branching, catalyzed by MGAT5 since it is unable to use the bisected oligosaccharide as a substrate. Addition of bisecting N-acetylglucosamine to CDH1/E-cadherin modulates CDH1 cell membrane location. Inhibits NeuAc-alpha-2,3-Gal-beta-1,4-GlcNAc- formation which modulates sialylation levels and plays a role in cell migration regulation. In brain, addition of bisecting N-acetylglucosamine to BACE1 blocks its lysosomal targeting in response to oxidative stress and further degradation which increases its location to early endosome and the APP cleavage. The chain is Beta-1,4-mannosyl-glycoprotein 4-beta-N-acetylglucosaminyltransferase from Homo sapiens (Human).